The chain runs to 988 residues: Next to BRCA1 gene 1 protein (988 aa).

The PB1 domain maps to 4–86 (QVTLNVTFKN…NQLQMQVHEG (83 aa)). Serine 117 is subject to Phosphoserine. Positions 126–150 (MKTTEEPAPEQCSSAPCDTDQPQDK) are disordered. The ZZ-type zinc-finger motif lies at 213–265 (SWHIACSHCQKRIVGVRYQCSLCPSYNICEDCEAGPYTHDTNHVLLKLRRPVV). Cysteine 218, cysteine 221, cysteine 232, cysteine 235, cysteine 241, cysteine 244, histidine 251, and histidine 255 together coordinate Zn(2+). 2 ATG8 family proteins-binding regions span residues 543-637 (ASER…PASV) and 745-756 (ASSEDYIIILPE). Threonine 587 carries the phosphothreonine modification. Serine 591, serine 597, and serine 626 each carry phosphoserine. The interval 611–644 (ESEGAGFKAPPDSTVSAKRKAETPASVEETEEDL) is disordered. Disordered regions lie at residues 768-822 (MYSS…TSQP) and 841-900 (RSAP…HHNG). Residues 795 to 807 (TEARERLPERESQ) show a composition bias toward basic and acidic residues. A compositionally biased stretch (polar residues) spans 808-822 (PQEQSISDILTTSQP). Serine 860 is subject to Phosphoserine. A UBA domain is found at 935-979 (SEDQTTALMAHLFEMGFCDRQLNLRLLRKHNYNILQVVTELLQVN).

In terms of assembly, homooligomer and heterooligomer. Interacts with TRIM55. Interacts with titin/TTN. Interacts with RNF29, USP8, MAP1LC3A, MAP1LC3B, MAP1LC3C, GABARAP, GABARAPL1 and GABARAPL2. Binds to ubiquitin and ubiquitinated proteins. Interacts with SQSTM1. Interacts with TAX1BP1. Interacts with IRF3; this interaction mediates autophagic degradation of IRF3. Interacts with IL12A and IL12B. In terms of processing, phosphorylated by GSK3A; this phosphorylation inhibits NBR1 involvement in the formation of ubiquitinated protein aggregates. Expressed in brain.

It is found in the cytoplasm. Its subcellular location is the cytoplasmic vesicle. The protein resides in the autophagosome. The protein localises to the lysosome. It localises to the myofibril. It is found in the sarcomere. Its subcellular location is the m line. Its function is as follows. Ubiquitin-binding autophagy adapter that participates in different processes including host defense or intracellular homeostasis. Possesses a double function during the selective autophagy by acting as a shuttle bringing ubiquitinated proteins to autophagosomes and also by participating in the formation of protein aggregates. Plays a role in the regulation of the innate immune response by modulating type I interferon production and targeting ubiquitinated IRF3 for autophagic degradation. In response to oxidative stress, promotes an increase in SQSTM1 levels, phosphorylation, and body formation by preventing its autophagic degradation. In turn, activates the KEAP1-NRF2/NFE2L2 antioxidant pathway. Also plays non-autophagy role by mediating the shuttle of IL-12 to late endosome for subsequent secretion. The protein is Next to BRCA1 gene 1 protein (Nbr1) of Mus musculus (Mouse).